The following is a 776-amino-acid chain: Ecdysone receptor (776 aa).

Residues 1–290 form a modulating region; that stretch reads MYRLNIVSTN…GPTPRQQEEL (290 aa). The disordered stretch occupies residues 199–283; that stretch reads NEEWISSPSP…DAKKQKKGPT (85 aa). A compositionally biased stretch (low complexity) spans 204–213; sequence SSPSPGSVPG. Composition is skewed to polar residues over residues 227–245 and 261–270; these read TTYT…STGS and SPSSSLNGYT. Residues 288 to 363 constitute a DNA-binding region (nuclear receptor); the sequence is EELCLVCGDR…VGMRPECVVP (76 aa). 2 NR C4-type zinc fingers span residues 291 to 311 and 327 to 346; these read CLVC…CEGC and CKFG…CQEC. An NR LBD domain is found at 437 to 673; sequence NQMAVIYKLI…FLEEIWDVQD (237 aa). Residues 679–688 show a composition bias toward polar residues; that stretch reads QAQMHSHGTQ. Positions 679–776 are disordered; sequence QAQMHSHGTQ…VPGLGMLDQV (98 aa). A compositionally biased stretch (low complexity) spans 689-745; that stretch reads SSSSSSSSSSSSSNGSSNGNSSSNSNSSQHGPHPHPHGQQLTPNQQQHQQQHSQLQQ.

Belongs to the nuclear hormone receptor family. NR1 subfamily. In terms of assembly, heterodimer of USP and ECR. Only the heterodimer is capable of high-affinity binding to ecdysone. In terms of tissue distribution, a peak level expression is seen in the fat body of previtellogenic female mosquitos at one and two days after eclosion, levels fall three-fold at three days posteclosion.

It is found in the nucleus. Receptor for ecdysone. Binds to ecdysone response elements (ECRES). The polypeptide is Ecdysone receptor (EcR) (Aedes aegypti (Yellowfever mosquito)).